The primary structure comprises 177 residues: Ribosome maturation factor RimM (177 aa).

The 74-residue stretch at Gly98–Leu171 folds into the PRC barrel domain.

The protein belongs to the RimM family. As to quaternary structure, binds ribosomal protein uS19.

It localises to the cytoplasm. An accessory protein needed during the final step in the assembly of 30S ribosomal subunit, possibly for assembly of the head region. Essential for efficient processing of 16S rRNA. May be needed both before and after RbfA during the maturation of 16S rRNA. It has affinity for free ribosomal 30S subunits but not for 70S ribosomes. The chain is Ribosome maturation factor RimM from Bdellovibrio bacteriovorus (strain ATCC 15356 / DSM 50701 / NCIMB 9529 / HD100).